The chain runs to 303 residues: UDP-3-O-acyl-N-acetylglucosamine deacetylase (303 aa).

Zn(2+) contacts are provided by His77, His236, and Asp240. His263 acts as the Proton donor in catalysis.

The protein belongs to the LpxC family. Zn(2+) serves as cofactor.

The catalysed reaction is a UDP-3-O-[(3R)-3-hydroxyacyl]-N-acetyl-alpha-D-glucosamine + H2O = a UDP-3-O-[(3R)-3-hydroxyacyl]-alpha-D-glucosamine + acetate. Its pathway is glycolipid biosynthesis; lipid IV(A) biosynthesis; lipid IV(A) from (3R)-3-hydroxytetradecanoyl-[acyl-carrier-protein] and UDP-N-acetyl-alpha-D-glucosamine: step 2/6. Catalyzes the hydrolysis of UDP-3-O-myristoyl-N-acetylglucosamine to form UDP-3-O-myristoylglucosamine and acetate, the committed step in lipid A biosynthesis. In Ruthia magnifica subsp. Calyptogena magnifica, this protein is UDP-3-O-acyl-N-acetylglucosamine deacetylase.